Reading from the N-terminus, the 482-residue chain is Ribosomal RNA small subunit methyltransferase F (482 aa).

Residues 119 to 125, Glu143, Asp170, and Asp188 each bind S-adenosyl-L-methionine; that span reads ASAPGSK. The active-site Nucleophile is Cys241.

It belongs to the class I-like SAM-binding methyltransferase superfamily. RsmB/NOP family.

The protein resides in the cytoplasm. The catalysed reaction is cytidine(1407) in 16S rRNA + S-adenosyl-L-methionine = 5-methylcytidine(1407) in 16S rRNA + S-adenosyl-L-homocysteine + H(+). Its function is as follows. Specifically methylates the cytosine at position 1407 (m5C1407) of 16S rRNA. The sequence is that of Ribosomal RNA small subunit methyltransferase F from Shewanella sp. (strain ANA-3).